A 508-amino-acid chain; its full sequence is Probable cytochrome P450 6d5 (508 aa).

A heme-binding site is contributed by Cys453.

This sequence belongs to the cytochrome P450 family. Requires heme as cofactor.

The protein localises to the endoplasmic reticulum membrane. The protein resides in the microsome membrane. Its function is as follows. May be involved in the metabolism of insect hormones and in the breakdown of synthetic insecticides. The chain is Probable cytochrome P450 6d5 (Cyp6d5) from Drosophila melanogaster (Fruit fly).